A 462-amino-acid polypeptide reads, in one-letter code: Glutamate--tRNA ligase (462 aa).

The 'HIGH' region motif lies at 11-21 (PSPTGFIHLGN). The short motif at 243 to 247 (KMSKR) is the 'KMSKS' region element. Lys246 contributes to the ATP binding site.

Belongs to the class-I aminoacyl-tRNA synthetase family. Glutamate--tRNA ligase type 1 subfamily. Monomer.

It is found in the cytoplasm. It catalyses the reaction tRNA(Glu) + L-glutamate + ATP = L-glutamyl-tRNA(Glu) + AMP + diphosphate. In terms of biological role, catalyzes the attachment of glutamate to tRNA(Glu) in a two-step reaction: glutamate is first activated by ATP to form Glu-AMP and then transferred to the acceptor end of tRNA(Glu). The polypeptide is Glutamate--tRNA ligase (Albidiferax ferrireducens (strain ATCC BAA-621 / DSM 15236 / T118) (Rhodoferax ferrireducens)).